The sequence spans 355 residues: Chorismate synthase (355 aa).

Arg46 contributes to the NADP(+) binding site. FMN contacts are provided by residues 123–125 (RAS), 233–234 (NG), Gly273, 288–292 (KPTPS), and Arg314.

The protein belongs to the chorismate synthase family. As to quaternary structure, homotetramer. FMNH2 serves as cofactor.

It carries out the reaction 5-O-(1-carboxyvinyl)-3-phosphoshikimate = chorismate + phosphate. It functions in the pathway metabolic intermediate biosynthesis; chorismate biosynthesis; chorismate from D-erythrose 4-phosphate and phosphoenolpyruvate: step 7/7. Its function is as follows. Catalyzes the anti-1,4-elimination of the C-3 phosphate and the C-6 proR hydrogen from 5-enolpyruvylshikimate-3-phosphate (EPSP) to yield chorismate, which is the branch point compound that serves as the starting substrate for the three terminal pathways of aromatic amino acid biosynthesis. This reaction introduces a second double bond into the aromatic ring system. This Campylobacter concisus (strain 13826) protein is Chorismate synthase.